We begin with the raw amino-acid sequence, 482 residues long: Isoxanthopterin deaminase (482 aa).

The Zn(2+) site is built by His-74 and His-76. Substrate is bound at residue Gln-79. A Zn(2+)-binding site is contributed by His-246. Residues Glu-249 and His-283 each contribute to the substrate site. 2 residues coordinate Zn(2+): His-283 and Asp-334.

The protein belongs to the metallo-dependent hydrolases superfamily. ATZ/TRZ family. The cofactor is Zn(2+).

It catalyses the reaction a 2-amino-4-hydroxypteridine + H2O + H(+) = a 2,4-dihydroxypteridine + NH4(+). This chain is Isoxanthopterin deaminase, found in Unknown prokaryotic organism.